Here is a 182-residue protein sequence, read N- to C-terminus: Large ribosomal subunit protein uL5 (182 aa).

Belongs to the universal ribosomal protein uL5 family. Part of the 50S ribosomal subunit; part of the 5S rRNA/L5/L18/L25 subcomplex. Contacts the 5S rRNA and the P site tRNA. Forms a bridge to the 30S subunit in the 70S ribosome.

Its function is as follows. This is one of the proteins that bind and probably mediate the attachment of the 5S RNA into the large ribosomal subunit, where it forms part of the central protuberance. In the 70S ribosome it contacts protein S13 of the 30S subunit (bridge B1b), connecting the 2 subunits; this bridge is implicated in subunit movement. Contacts the P site tRNA; the 5S rRNA and some of its associated proteins might help stabilize positioning of ribosome-bound tRNAs. This Leptospira interrogans serogroup Icterohaemorrhagiae serovar copenhageni (strain Fiocruz L1-130) protein is Large ribosomal subunit protein uL5.